Consider the following 520-residue polypeptide: TnpB-like protein L79 (520 aa).

The span at 21 to 47 shows a compositional bias: basic residues; it reads GSKTKKKVFVKKKPPDKKPLKKPVKKT. Residues 21–52 are disordered; the sequence is GSKTKKKVFVKKKPPDKKPLKKPVKKTVKTDK. Residues C474, C477, C491, and C494 each coordinate Zn(2+).

The protein in the central section; belongs to the transposase 2 family. This sequence in the C-terminal section; belongs to the transposase 35 family.

The polypeptide is TnpB-like protein L79 (Acanthamoeba polyphaga mimivirus (APMV)).